The following is a 538-amino-acid chain: Phosphoenolpyruvate carboxykinase (ATP) (538 aa).

Substrate is bound by residues Arg61, Tyr195, and Lys201. ATP-binding positions include Lys201, His220, and 236 to 244 (GLSGTGKTT). The Mn(2+) site is built by Lys201 and His220. Asp257 contributes to the Mn(2+) binding site. The ATP site is built by Glu285, Arg323, and Thr449. Arg323 lines the substrate pocket.

Belongs to the phosphoenolpyruvate carboxykinase (ATP) family. Mn(2+) serves as cofactor.

It is found in the cytoplasm. It carries out the reaction oxaloacetate + ATP = phosphoenolpyruvate + ADP + CO2. It participates in carbohydrate biosynthesis; gluconeogenesis. Its function is as follows. Involved in the gluconeogenesis. Catalyzes the conversion of oxaloacetate (OAA) to phosphoenolpyruvate (PEP) through direct phosphoryl transfer between the nucleoside triphosphate and OAA. In Nitrobacter hamburgensis (strain DSM 10229 / NCIMB 13809 / X14), this protein is Phosphoenolpyruvate carboxykinase (ATP).